The sequence spans 174 residues: Probable E3 ubiquitin-protein ligase RHA4A (174 aa).

The RING-type; atypical zinc-finger motif lies at 105–147 (CCVCLGEFELKEELVEMPLCKHIFHLDCIHLWLYSHNTCPLCR). The tract at residues 155-174 (TKTSVDDDNDHPDSPQTSPV) is disordered.

Expressed in stems, flowers, cauline leaves and roots.

It catalyses the reaction S-ubiquitinyl-[E2 ubiquitin-conjugating enzyme]-L-cysteine + [acceptor protein]-L-lysine = [E2 ubiquitin-conjugating enzyme]-L-cysteine + N(6)-ubiquitinyl-[acceptor protein]-L-lysine.. It participates in protein modification; protein ubiquitination. Probable E3 ubiquitin-protein ligase that may possess E3 ubiquitin ligase activity in vitro. In Arabidopsis thaliana (Mouse-ear cress), this protein is Probable E3 ubiquitin-protein ligase RHA4A.